Consider the following 277-residue polypeptide: Glycerol-3-phosphate acyltransferase (277 aa).

5 helical membrane-spanning segments follow: residues 3–23 (LFIFLILVGYLMGSINSAIIV), 55–75 (IMVMVFDALKGILPVILAKLL), 79–99 (PVTVAFTALAAVVGHMYPVFF), 111–131 (IGALLAFHFVIGVMVAATWLL), and 155–175 (LILVGNLNIFPPLFMITILVL). The tract at residues 207 to 277 (SPATSAEQEF…PKTKTVKEKE (71 aa)) is disordered. A compositionally biased stretch (basic and acidic residues) spans 216 to 239 (FPGKEVIDTNIDETEKTEQAEAVK). Composition is skewed to basic residues over residues 240–253 (KPKVKKATTKAKKT) and 262–271 (KPKSTKPKTK).

Belongs to the PlsY family. As to quaternary structure, probably interacts with PlsX.

The protein resides in the cell inner membrane. It catalyses the reaction an acyl phosphate + sn-glycerol 3-phosphate = a 1-acyl-sn-glycero-3-phosphate + phosphate. It functions in the pathway lipid metabolism; phospholipid metabolism. Catalyzes the transfer of an acyl group from acyl-phosphate (acyl-PO(4)) to glycerol-3-phosphate (G3P) to form lysophosphatidic acid (LPA). This enzyme utilizes acyl-phosphate as fatty acyl donor, but not acyl-CoA or acyl-ACP. The polypeptide is Glycerol-3-phosphate acyltransferase (Legionella pneumophila (strain Corby)).